The chain runs to 293 residues: Homoserine kinase (293 aa).

Residue 84–94 (PLSRGLGSSSA) coordinates ATP.

It belongs to the GHMP kinase family. Homoserine kinase subfamily.

The protein localises to the cytoplasm. The enzyme catalyses L-homoserine + ATP = O-phospho-L-homoserine + ADP + H(+). The protein operates within amino-acid biosynthesis; L-threonine biosynthesis; L-threonine from L-aspartate: step 4/5. Catalyzes the ATP-dependent phosphorylation of L-homoserine to L-homoserine phosphate. This chain is Homoserine kinase, found in Nautilia profundicola (strain ATCC BAA-1463 / DSM 18972 / AmH).